The chain runs to 387 residues: Lipid-A-disaccharide synthase (387 aa).

This sequence belongs to the LpxB family.

It catalyses the reaction a lipid X + a UDP-2-N,3-O-bis[(3R)-3-hydroxyacyl]-alpha-D-glucosamine = a lipid A disaccharide + UDP + H(+). The protein operates within bacterial outer membrane biogenesis; LPS lipid A biosynthesis. In terms of biological role, condensation of UDP-2,3-diacylglucosamine and 2,3-diacylglucosamine-1-phosphate to form lipid A disaccharide, a precursor of lipid A, a phosphorylated glycolipid that anchors the lipopolysaccharide to the outer membrane of the cell. This chain is Lipid-A-disaccharide synthase, found in Nitrosococcus oceani (strain ATCC 19707 / BCRC 17464 / JCM 30415 / NCIMB 11848 / C-107).